Consider the following 180-residue polypeptide: Beta-lactoglobulin (180 aa).

The N-terminal stretch at 1–18 (MKCLLLALGLALACGIQA) is a signal peptide. Cystine bridges form between Cys84–Cys178, Cys124–Cys137, and Cys124–Cys139.

The protein belongs to the calycin superfamily. Lipocalin family. Under physiological conditions beta-lactoglobulin exists as an equilibrium mixture of monomeric and dimeric forms. Interaction with LMBR1L is controversial. Post-translationally, alternate disulfide bonds occur in equal amounts. In terms of tissue distribution, synthesized in mammary gland and secreted in milk.

The protein localises to the secreted. In terms of biological role, primary component of whey, it binds retinol and is probably involved in the transport of that molecule. The polypeptide is Beta-lactoglobulin (LGB) (Capra hircus (Goat)).